The chain runs to 252 residues: uncharacterized protein (252 aa).

The HTH deoR-type domain maps to 3–58; sequence AKDRIQAIKQMVANDKKVTVSNLSGIFQVTEETIRRDLEKLEDEGFLTRTYGGAVL. Positions 20-39 form a DNA-binding region, H-T-H motif; that stretch reads VTVSNLSGIFQVTEETIRRD.

This is an uncharacterized protein from Escherichia coli (strain K12).